We begin with the raw amino-acid sequence, 181 residues long: MAVTNQMVAPRYAKALLEAAKDQNQVETVHEELQALQSVFNDNPTILTIFDNARITAADKDALMTTLTKDASPLVANLLKLTQQYGRFGALPAIISAFNQAYDEEAGIIAATVTTAVALSADQADALRSTIAARFGMKSTQLDQVVDPSVIGGVRIQARGSVIDGTVKHRFDKMKAALLAD.

Belongs to the ATPase delta chain family. In terms of assembly, F-type ATPases have 2 components, F(1) - the catalytic core - and F(0) - the membrane proton channel. F(1) has five subunits: alpha(3), beta(3), gamma(1), delta(1), epsilon(1). F(0) has three main subunits: a(1), b(2) and c(10-14). The alpha and beta chains form an alternating ring which encloses part of the gamma chain. F(1) is attached to F(0) by a central stalk formed by the gamma and epsilon chains, while a peripheral stalk is formed by the delta and b chains.

It is found in the cell membrane. Its function is as follows. F(1)F(0) ATP synthase produces ATP from ADP in the presence of a proton or sodium gradient. F-type ATPases consist of two structural domains, F(1) containing the extramembraneous catalytic core and F(0) containing the membrane proton channel, linked together by a central stalk and a peripheral stalk. During catalysis, ATP synthesis in the catalytic domain of F(1) is coupled via a rotary mechanism of the central stalk subunits to proton translocation. In terms of biological role, this protein is part of the stalk that links CF(0) to CF(1). It either transmits conformational changes from CF(0) to CF(1) or is implicated in proton conduction. The polypeptide is ATP synthase subunit delta (Lacticaseibacillus casei (strain BL23) (Lactobacillus casei)).